Reading from the N-terminus, the 328-residue chain is Tryptophan--tRNA ligase (328 aa).

Residues 11–13 (QPT) and 19–20 (GN) contribute to the ATP site. Positions 12–20 (PTGNIHLGN) match the 'HIGH' region motif. Residue Asp135 participates in L-tryptophan binding. Residues 147 to 149 (GED), Ile186, and 195 to 199 (KMSKS) contribute to the ATP site. Positions 195-199 (KMSKS) match the 'KMSKS' region motif.

Belongs to the class-I aminoacyl-tRNA synthetase family. Homodimer.

The protein resides in the cytoplasm. It catalyses the reaction tRNA(Trp) + L-tryptophan + ATP = L-tryptophyl-tRNA(Trp) + AMP + diphosphate + H(+). Catalyzes the attachment of tryptophan to tRNA(Trp). This Wolinella succinogenes (strain ATCC 29543 / DSM 1740 / CCUG 13145 / JCM 31913 / LMG 7466 / NCTC 11488 / FDC 602W) (Vibrio succinogenes) protein is Tryptophan--tRNA ligase.